Here is an 803-residue protein sequence, read N- to C-terminus: Translation initiation factor IF-2 (803 aa).

A compositionally biased stretch (basic and acidic residues) spans P65 to T75. Residues P65–K186 form a disordered region. The span at N175 to L185 shows a compositional bias: basic residues. One can recognise a tr-type G domain in the interval I300–E468. Residues G309–T316 are G1. G309–T316 is a binding site for GTP. A G2 region spans residues G334–H338. Residues D355–G358 form a G3 region. Residues D355–H359 and N409–D412 each bind GTP. The segment at N409–D412 is G4. Positions S445–K447 are G5.

Belongs to the TRAFAC class translation factor GTPase superfamily. Classic translation factor GTPase family. IF-2 subfamily.

The protein resides in the cytoplasm. Functionally, one of the essential components for the initiation of protein synthesis. Protects formylmethionyl-tRNA from spontaneous hydrolysis and promotes its binding to the 30S ribosomal subunits. Also involved in the hydrolysis of GTP during the formation of the 70S ribosomal complex. In Tropheryma whipplei (strain TW08/27) (Whipple's bacillus), this protein is Translation initiation factor IF-2.